The sequence spans 169 residues: Peptide methionine sulfoxide reductase MsrA (169 aa).

The active site involves C10.

Belongs to the MsrA Met sulfoxide reductase family.

It catalyses the reaction L-methionyl-[protein] + [thioredoxin]-disulfide + H2O = L-methionyl-(S)-S-oxide-[protein] + [thioredoxin]-dithiol. The catalysed reaction is [thioredoxin]-disulfide + L-methionine + H2O = L-methionine (S)-S-oxide + [thioredoxin]-dithiol. Functionally, has an important function as a repair enzyme for proteins that have been inactivated by oxidation. Catalyzes the reversible oxidation-reduction of methionine sulfoxide in proteins to methionine. The protein is Peptide methionine sulfoxide reductase MsrA of Streptococcus pyogenes serotype M6 (strain ATCC BAA-946 / MGAS10394).